A 486-amino-acid chain; its full sequence is Cardiolipin synthase A (486 aa).

Helical transmembrane passes span 3 to 23 (TVYTLVSWLAILGYWLLIAGV) and 38 to 58 (MAWLLIIYILPLVGIIAYLAV). PLD phosphodiesterase domains are found at residues 219–246 (MDLRQHRKMIMIDNYIAYTGSMNMVDPR) and 399–426 (EGGLLHTKSVLVDGELSLVGTVNLDMRS). Residues histidine 224, lysine 226, aspartate 231, histidine 404, lysine 406, and aspartate 411 contribute to the active site.

It belongs to the phospholipase D family. Cardiolipin synthase subfamily. ClsA sub-subfamily.

Its subcellular location is the cell inner membrane. It carries out the reaction 2 a 1,2-diacyl-sn-glycero-3-phospho-(1'-sn-glycerol) = a cardiolipin + glycerol. In terms of biological role, catalyzes the reversible phosphatidyl group transfer from one phosphatidylglycerol molecule to another to form cardiolipin (CL) (diphosphatidylglycerol) and glycerol. In Escherichia coli O157:H7 (strain EC4115 / EHEC), this protein is Cardiolipin synthase A.